A 151-amino-acid chain; its full sequence is Small ribosomal subunit protein uS13 (151 aa).

The disordered stretch occupies residues Arg-131–Gln-151. The span at Gln-133–Gln-151 shows a compositional bias: basic residues.

This sequence belongs to the universal ribosomal protein uS13 family. As to quaternary structure, part of the 30S ribosomal subunit. Forms a loose heterodimer with protein S19. Forms two bridges to the 50S subunit in the 70S ribosome.

Located at the top of the head of the 30S subunit, it contacts several helices of the 16S rRNA. In the 70S ribosome it contacts the 23S rRNA (bridge B1a) and protein L5 of the 50S subunit (bridge B1b), connecting the 2 subunits; these bridges are implicated in subunit movement. The protein is Small ribosomal subunit protein uS13 of Methanopyrus kandleri (strain AV19 / DSM 6324 / JCM 9639 / NBRC 100938).